A 215-amino-acid polypeptide reads, in one-letter code: 2-dehydro-3-deoxy-phosphogluconate aldolase (215 aa).

E46 acts as the Proton acceptor in catalysis. Residues R50, T74, and K134 each contribute to the pyruvate site. K134 functions as the Schiff-base intermediate with substrate in the catalytic mechanism.

Belongs to the KHG/KDPG aldolase family. Homotrimer.

The enzyme catalyses 2-dehydro-3-deoxy-6-phospho-D-gluconate = D-glyceraldehyde 3-phosphate + pyruvate. It functions in the pathway carbohydrate acid metabolism; 2-dehydro-3-deoxy-D-gluconate degradation; D-glyceraldehyde 3-phosphate and pyruvate from 2-dehydro-3-deoxy-D-gluconate: step 2/2. In terms of biological role, involved in the degradation of glucose via the Entner-Doudoroff pathway. Catalyzes the reversible, stereospecific retro-aldol cleavage of 2-keto-3-deoxy-6-phosphogluconate (KDPG) to pyruvate and D-glyceraldehyde-3-phosphate. Involved in the degradation of 3,6-anhydro-L-galactose (L-AnG), which is the major monomeric sugar of red macroalgae. The cleavage of KDPG to glyceraldehyde 3-phosphate and pyruvate is the sixth step of this pathway. This is 2-dehydro-3-deoxy-phosphogluconate aldolase from Pseudoalteromonas atlantica (strain T6c / ATCC BAA-1087).